The sequence spans 506 residues: Dolichyl pyrophosphate Glc1Man9GlcNAc2 alpha-1,3-glucosyltransferase (506 aa).

12 consecutive transmembrane segments (helical) span residues 10 to 30, 101 to 121, 133 to 153, 176 to 196, 219 to 239, 261 to 281, 305 to 325, 339 to 359, 384 to 401, 406 to 426, 454 to 474, and 479 to 499; these read RLLL…IPSS, VIYF…YGVY, NLIC…HIHF, LLGG…AVTA, LVTI…PFIY, YWAP…AVLL, PFAV…LLAI, GLVA…GWHV, HYFL…PLLY, YPIK…GFAA, YLMG…YFLG, and FLPL…SWIW.

The protein belongs to the ALG6/ALG8 glucosyltransferase family.

The protein resides in the endoplasmic reticulum membrane. It carries out the reaction an alpha-D-Glc-(1-&gt;3)-alpha-D-Man-(1-&gt;2)-alpha-D-Man-(1-&gt;2)-alpha-D-Man-(1-&gt;3)-[alpha-D-Man-(1-&gt;2)-alpha-D-Man-(1-&gt;3)-[alpha-D-Man-(1-&gt;2)-alpha-D-Man-(1-&gt;6)]-alpha-D-Man-(1-&gt;6)]-beta-D-Man-(1-&gt;4)-beta-D-GlcNAc-(1-&gt;4)-alpha-D-GlcNAc-diphospho-di-trans,poly-cis-dolichol + a di-trans,poly-cis-dolichyl beta-D-glucosyl phosphate = an alpha-D-Glc-(1-&gt;3)-alpha-D-Glc-(1-&gt;3)-alpha-D-Man-(1-&gt;2)-alpha-D-Man-(1-&gt;2)-alpha-D-Man-(1-&gt;3)-[alpha-D-Man-(1-&gt;2)-alpha-D-Man-(1-&gt;3)-[alpha-D-Man-(1-&gt;2)-alpha-D-Man-(1-&gt;6)]-alpha-D-Man-(1-&gt;6)]-beta-D-Man-(1-&gt;4)-beta-D-GlcNAc-(1-&gt;4)-alpha-D-GlcNAc-diphospho-di-trans,poly-cis-dolichol + a di-trans,poly-cis-dolichyl phosphate + H(+). It participates in protein modification; protein glycosylation. Functionally, dolichyl pyrophosphate Glc1Man9GlcNAc2 alpha-1,3-glucosyltransferase that operates in the biosynthetic pathway of dolichol-linked oligosaccharides, the glycan precursors employed in protein asparagine (N)-glycosylation. The assembly of dolichol-linked oligosaccharides begins on the cytosolic side of the endoplasmic reticulum membrane and finishes in its lumen. The sequential addition of sugars to dolichol pyrophosphate produces dolichol-linked oligosaccharides containing fourteen sugars, including two GlcNAcs, nine mannoses and three glucoses. Once assembled, the oligosaccharide is transferred from the lipid to nascent proteins by oligosaccharyltransferases. In the lumen of the endoplasmic reticulum, adds the second glucose residue from dolichyl phosphate glucose (Dol-P-Glc) onto the lipid-linked oligosaccharide intermediate Glc(1)Man(9)GlcNAc(2)-PP-Dol to produce Glc(2)Man(9)GlcNAc(2)-PP-Dol. This Arabidopsis thaliana (Mouse-ear cress) protein is Dolichyl pyrophosphate Glc1Man9GlcNAc2 alpha-1,3-glucosyltransferase.